The chain runs to 441 residues: Peroxisome proliferator-activated receptor delta (441 aa).

The tract at residues 1–58 is disordered; it reads MEQPPGEAAEVREEEEKKEVAEAEGAPELNGGPERSLPSSSYTDLSRSSSPPSLLDQL. Over residues 9 to 21 the composition is skewed to basic and acidic residues; it reads AEVREEEEKKEVA. Low complexity predominate over residues 36 to 55; sequence SLPSSSYTDLSRSSSPPSLL. Residues 70 to 145 constitute a DNA-binding region (nuclear receptor); sequence LNMECRVCGD…LGMSHNAIRF (76 aa). 2 consecutive NR C4-type zinc fingers follow at residues 74–94 and 111–133; these read CRVC…CEGC and CERI…FQKC. Positions 211-439 constitute an NR LBD domain; that stretch reads FVIHDIETLW…HPLLQEIYKD (229 aa).

The protein belongs to the nuclear hormone receptor family. NR1 subfamily. In terms of assembly, heterodimer with the retinoid X receptor. Interacts (via domain NR LBD) with CRY1 and CRY2 in a ligand-dependent manner. In terms of processing, 'Lys-48'-linked polyubiquitinated; leading to proteasomal degradation. Deubiquitinated and stabilized by OTUD3.

The protein resides in the nucleus. Its function is as follows. Ligand-activated transcription factor key mediator of energy metabolism in adipose tissues. Receptor that binds peroxisome proliferators such as hypolipidemic drugs and fatty acids. Has a preference for poly-unsaturated fatty acids, such as gamma-linoleic acid and eicosapentanoic acid. Once activated by a ligand, the receptor binds to promoter elements of target genes. Regulates the peroxisomal beta-oxidation pathway of fatty acids. Functions as a transcription activator for the acyl-CoA oxidase gene. Decreases expression of NPC1L1 once activated by a ligand. This is Peroxisome proliferator-activated receptor delta (PPARD) from Canis lupus familiaris (Dog).